Consider the following 217-residue polypeptide: Cytidylate kinase (217 aa).

ATP is bound at residue glycine 9 to threonine 17.

Belongs to the cytidylate kinase family. Type 1 subfamily.

Its subcellular location is the cytoplasm. The catalysed reaction is CMP + ATP = CDP + ADP. It catalyses the reaction dCMP + ATP = dCDP + ADP. This chain is Cytidylate kinase, found in Clostridium acetobutylicum (strain ATCC 824 / DSM 792 / JCM 1419 / IAM 19013 / LMG 5710 / NBRC 13948 / NRRL B-527 / VKM B-1787 / 2291 / W).